Consider the following 450-residue polypeptide: tRNA-2-methylthio-N(6)-dimethylallyladenosine synthase (450 aa).

The region spanning 3 to 118 (KKVFIKTFGC…LPELLQQRER (116 aa)) is the MTTase N-terminal domain. Residues C12, C49, C81, C155, C159, and C162 each contribute to the [4Fe-4S] cluster site. The 236-residue stretch at 141-376 (SVQGASAFVS…VIDTHIRSIS (236 aa)) folds into the Radical SAM core domain. In terms of domain architecture, TRAM spans 377-440 (ASRVGTVQRI…AYTLRGQYCA (64 aa)).

It belongs to the methylthiotransferase family. MiaB subfamily. In terms of assembly, monomer. Requires [4Fe-4S] cluster as cofactor.

The protein resides in the cytoplasm. It carries out the reaction N(6)-dimethylallyladenosine(37) in tRNA + (sulfur carrier)-SH + AH2 + 2 S-adenosyl-L-methionine = 2-methylsulfanyl-N(6)-dimethylallyladenosine(37) in tRNA + (sulfur carrier)-H + 5'-deoxyadenosine + L-methionine + A + S-adenosyl-L-homocysteine + 2 H(+). In terms of biological role, catalyzes the methylthiolation of N6-(dimethylallyl)adenosine (i(6)A), leading to the formation of 2-methylthio-N6-(dimethylallyl)adenosine (ms(2)i(6)A) at position 37 in tRNAs that read codons beginning with uridine. This is tRNA-2-methylthio-N(6)-dimethylallyladenosine synthase from Verminephrobacter eiseniae (strain EF01-2).